The chain runs to 736 residues: Alpha-xylosidase A (736 aa).

An N-terminal signal peptide occupies residues 1-18 (MYFSSFLALGALVQAAAA). N-linked (GlcNAc...) asparagine glycosylation is found at Asn24, Asn279, Asn332, and Asn376. Asp413 is an active-site residue. A glycan (N-linked (GlcNAc...) asparagine) is linked at Asn471. Catalysis depends on Asp505, which acts as the Proton donor. Residues Asn655, Asn676, Asn690, and Asn701 are each glycosylated (N-linked (GlcNAc...) asparagine).

It belongs to the glycosyl hydrolase 31 family.

Its subcellular location is the secreted. The catalysed reaction is Hydrolysis of terminal, non-reducing alpha-D-xylose residues with release of alpha-D-xylose.. In terms of biological role, catalyzes the liberation of alpha-xylose from the non-reducing terminal glucose of xyloglucan oligosaccharides. The chain is Alpha-xylosidase A from Aspergillus niger (strain ATCC MYA-4892 / CBS 513.88 / FGSC A1513).